The sequence spans 509 residues: MASVISSSPFLCKSSSKSDLGISSFPKSSQISIHRCQKKSISRKIVSVMAPQKDRSPGTTGSVKTGMTMTEKILARASEKSLVVPGDNIWVNVDVLMTHDVCGPGAFGIFKREFGEKAKVWDPEKIVVIPDHYIFTADKRANRNVDIMREHCREQNIKYFYDITDLGNFKANPDYKGVCHVALAQEGHCRPGEVLLGTDSHTCTAGAFGQFATGIGNTDAGFVLGTGKILLKVPPTMRFILDGEMPSYLQAKDLILQIIGEISVAGATYKTMEFSGTTIESLSMEERMTLCNMVVEAGGKNGVIPPDATTLNYVENRTSVPFEPVYSDGNASFVADYRFDVSKLEPVVAKPHSPDNRALARECKDVKIDRVYIGSCTGGKTEDFMAAAKLFHAAGRKVKVPTFLVPATQKVWMDVYALPVPGAGGKTCAQIFEEAGCDTPASPSCGACLGGPADTYARLNEPQVCVSTTNRNFPGRMGHKEGQIYLASPYTAAASALTGRVADPREFLQ.

Residues M1–S24 are compositionally biased toward low complexity. The disordered stretch occupies residues M1–F25. Residues M1–S47 constitute a chloroplast transit peptide. [4Fe-4S] cluster contacts are provided by C376, C445, and C448.

It belongs to the aconitase/IPM isomerase family. Heterodimer of the large LEUC/IIL1 subunit and the small LEUD (SSU1, SSU2 or SSU3) subunits. It depends on [4Fe-4S] cluster as a cofactor. Expressed in roots, leaves, stems and flowers. Expressed at low levels in siliques.

It localises to the plastid. The protein resides in the chloroplast stroma. The enzyme catalyses (2R,3S)-3-isopropylmalate = (2S)-2-isopropylmalate. It catalyses the reaction a 2-(omega-methylsulfanyl)alkylmalate = a 2-(omega-methylsulfanyl)alkylmaleate + H2O. It carries out the reaction 2-(3-methylsulfanyl)propylmalate = 2-(2-methylsulfanyl)propylmaleate + H2O. The catalysed reaction is a 3-(omega-methylsulfanyl)alkylmalate = a 2-(omega-methylsulfanyl)alkylmaleate + H2O. The enzyme catalyses 2-(2-methylsulfanyl)ethylmalate = 2-(2-methylsulfanyl)ethylmaleate + H2O. It catalyses the reaction 3-(2-methylsulfanyl)ethylmalate = 2-(2-methylsulfanyl)ethylmaleate + H2O. It carries out the reaction 3-(3-methylsulfanyl)propylmalate = 2-(2-methylsulfanyl)propylmaleate + H2O. It functions in the pathway amino-acid biosynthesis; L-leucine biosynthesis; L-leucine from 3-methyl-2-oxobutanoate: step 2/4. Functionally, catalyzes the isomerization between 2-isopropylmalate and 3-isopropylmalate, via the formation of 2-isopropylmaleate. Functions in both the biosynthesis of leucine and in the methionine chain elongation pathway of aliphatic glucosinolate formation. The chain is 3-isopropylmalate dehydratase large subunit, chloroplastic from Arabidopsis thaliana (Mouse-ear cress).